The primary structure comprises 546 residues: MTTNYIFVTGGVVSSLGKGIAAASLAAILEARGLKVTMMKLDPYINVDPGTMSPTQHGEVFVTEDGAETDLDLGHYERFIRTKMTKRNNFTAGRVYSDVLAKERRGDYLGATIQVIPHITNSIKERVISGAAGHDIALVEVGGTVGDIESLPFMEAIRQLAVELGRERAMFMHLTLVPYLAAAGEVKTKPTQHSVKELLSIGIQPDILVCRSDRNIPSNERKKIALFCNVQENAVISMRDVDSIYKIPQLIKAQGTDELVCKRFGITAPEADLSEWEQVIYEEANPTGEVTIGMVGKYIELPDAYKSVNEALKHAGLKNRLSVNIKYVDSQDVESRGVEVLEGLDAILVPGGFGDRGVEGKILAAQYARENKVPYLGICLGMQVALIEYARNVAKMEGAHSSEFCTETKYPVVGLITEWTDGEGKVEERTETSDLGGTMRLGSQLCHLAKGTKAYELYGSATIHERHRHRYEVNNNLRPQIEKAGLKVSGLSADKKLVEVIENPNHPWFVAAQFHPEFTSTPRDGHPLFAGFVKAAGEFQRGELEK.

The amidoligase domain stretch occupies residues 1–266; sequence MTTNYIFVTG…DELVCKRFGI (266 aa). Ser-14 contributes to the CTP binding site. Ser-14 is a UTP binding site. ATP is bound by residues 15 to 20 and Asp-72; that span reads SLGKGI. Positions 72 and 140 each coordinate Mg(2+). CTP is bound by residues 147–149, 187–192, and Lys-223; these read DIE and KTKPTQ. Residues 187–192 and Lys-223 contribute to the UTP site; that span reads KTKPTQ. 239–241 contacts ATP; sequence RDV. A Glutamine amidotransferase type-1 domain is found at 291 to 542; that stretch reads TIGMVGKYIE…VKAAGEFQRG (252 aa). Gly-352 is an L-glutamine binding site. Catalysis depends on Cys-379, which acts as the Nucleophile; for glutamine hydrolysis. L-glutamine-binding positions include 380–383, Glu-403, and Arg-470; that span reads LGMQ. Catalysis depends on residues His-515 and Glu-517.

The protein belongs to the CTP synthase family. In terms of assembly, homotetramer.

It catalyses the reaction UTP + L-glutamine + ATP + H2O = CTP + L-glutamate + ADP + phosphate + 2 H(+). The enzyme catalyses L-glutamine + H2O = L-glutamate + NH4(+). It carries out the reaction UTP + NH4(+) + ATP = CTP + ADP + phosphate + 2 H(+). Its pathway is pyrimidine metabolism; CTP biosynthesis via de novo pathway; CTP from UDP: step 2/2. Allosterically activated by GTP, when glutamine is the substrate; GTP has no effect on the reaction when ammonia is the substrate. The allosteric effector GTP functions by stabilizing the protein conformation that binds the tetrahedral intermediate(s) formed during glutamine hydrolysis. Inhibited by the product CTP, via allosteric rather than competitive inhibition. Functionally, catalyzes the ATP-dependent amination of UTP to CTP with either L-glutamine or ammonia as the source of nitrogen. Regulates intracellular CTP levels through interactions with the four ribonucleotide triphosphates. This is CTP synthase from Vibrio atlanticus (strain LGP32) (Vibrio splendidus (strain Mel32)).